The following is a 141-amino-acid chain: uncharacterized protein (141 aa).

Residues 13–35 (PVIGVILMVAITVILAAVIASFV) traverse the membrane as a helical segment.

The protein localises to the membrane. This is an uncharacterized protein from Archaeoglobus fulgidus (strain ATCC 49558 / DSM 4304 / JCM 9628 / NBRC 100126 / VC-16).